Consider the following 126-residue polypeptide: Large ribosomal subunit protein bL19 (126 aa).

Belongs to the bacterial ribosomal protein bL19 family.

In terms of biological role, this protein is located at the 30S-50S ribosomal subunit interface and may play a role in the structure and function of the aminoacyl-tRNA binding site. The sequence is that of Large ribosomal subunit protein bL19 from Nitrobacter winogradskyi (strain ATCC 25391 / DSM 10237 / CIP 104748 / NCIMB 11846 / Nb-255).